Here is a 43-residue protein sequence, read N- to C-terminus: Protein PsbN (43 aa).

Residues 7-27 (VAIFISGLLVSFTGYALYTAF) traverse the membrane as a helical segment.

Belongs to the PsbN family.

It localises to the plastid. Its subcellular location is the chloroplast thylakoid membrane. Its function is as follows. May play a role in photosystem I and II biogenesis. The protein is Protein PsbN of Daucus carota (Wild carrot).